The primary structure comprises 315 residues: Putative heme-binding peroxidase (315 aa).

Catalysis depends on His-40, which acts as the Proton acceptor. His-169 contributes to the heme b binding site. Trp-185 serves as the catalytic Tryptophan radical intermediate. Positions 267-286 are disordered; sequence EEGKPLDKTAPPAGDETCPV.

This sequence belongs to the peroxidase family. Cytochrome c peroxidase subfamily. It depends on heme b as a cofactor.

Functionally, destroys radicals which are normally produced within the cells and which are toxic to biological systems. In Cryptococcus neoformans var. neoformans serotype D (strain B-3501A) (Filobasidiella neoformans), this protein is Putative heme-binding peroxidase.